The following is a 130-amino-acid chain: Small ribosomal subunit protein uS8 (130 aa).

It belongs to the universal ribosomal protein uS8 family. In terms of assembly, part of the 30S ribosomal subunit.

In terms of biological role, one of the primary rRNA binding proteins, it binds directly to 16S rRNA central domain where it helps coordinate assembly of the platform of the 30S subunit. The protein is Small ribosomal subunit protein uS8 of Methanococcus maripaludis (strain C5 / ATCC BAA-1333).